The following is a 448-amino-acid chain: Homogentisate 1,2-dioxygenase (448 aa).

Catalysis depends on His303, which acts as the Proton acceptor. Residues His346 and Glu352 each coordinate Fe cation. Tyr361 and His382 together coordinate homogentisate. His382 is a Fe cation binding site.

Belongs to the homogentisate dioxygenase family. As to quaternary structure, hexamer; dimer of trimers. Requires Fe cation as cofactor.

It carries out the reaction homogentisate + O2 = 4-maleylacetoacetate + H(+). It functions in the pathway amino-acid degradation; L-phenylalanine degradation; acetoacetate and fumarate from L-phenylalanine: step 4/6. Involved in the catabolism of homogentisate (2,5-dihydroxyphenylacetate or 2,5-OH-PhAc), a central intermediate in the degradation of phenylalanine and tyrosine. Catalyzes the oxidative ring cleavage of the aromatic ring of homogentisate to yield maleylacetoacetate. This Rhodopseudomonas palustris (strain ATCC BAA-98 / CGA009) protein is Homogentisate 1,2-dioxygenase.